Reading from the N-terminus, the 383-residue chain is Protein RecA (383 aa).

An ATP-binding site is contributed by 79-86 (GPESSGKT).

The protein belongs to the RecA family.

The protein localises to the cytoplasm. Functionally, can catalyze the hydrolysis of ATP in the presence of single-stranded DNA, the ATP-dependent uptake of single-stranded DNA by duplex DNA, and the ATP-dependent hybridization of homologous single-stranded DNAs. It interacts with LexA causing its activation and leading to its autocatalytic cleavage. The sequence is that of Protein RecA from Streptococcus gordonii (strain Challis / ATCC 35105 / BCRC 15272 / CH1 / DL1 / V288).